The chain runs to 715 residues: ATP-dependent zinc metalloprotease YME1L1 (715 aa).

The interval 31–54 (VSVNTSASPKQHRDTVAEHEAPSS) is disordered. Over residues 41-52 (QHRDTVAEHEAP) the composition is skewed to basic and acidic residues. A helical transmembrane segment spans residues 238-258 (ILFVLLLFGIYGLLKNPFLSV). The ATP site is built by Val-283, Thr-325, Gly-326, Lys-327, Thr-328, and Leu-329. His-541 is a Zn(2+) binding site. Glu-542 is a catalytic residue. Positions 545 and 619 each coordinate Zn(2+).

This sequence in the N-terminal section; belongs to the AAA ATPase family. It in the C-terminal section; belongs to the peptidase M41 family. Homohexamer; may also form heterohexamers. Exists in several complexes of 600-1100 kDa. Interacts with AFG1L. Zn(2+) serves as cofactor. Post-translationally, proteolytically processed by mitochondrial processing peptidase (MPP) to generate the mature form. Degraded in an OMA1-dependent manner in response to oxidative stress.

The protein resides in the mitochondrion inner membrane. The protein localises to the mitochondrion. It catalyses the reaction ATP + H2O = ADP + phosphate + H(+). Functionally, ATP-dependent metalloprotease that catalyzes the degradation of folded and unfolded proteins with a suitable degron sequence in the mitochondrial intermembrane region. Plays an important role in regulating mitochondrial morphology and function by cleaving OPA1 at position S2, giving rise to a form of OPA1 that promotes maintenance of normal mitochondrial structure and mitochondrial protein metabolism. Ensures cell proliferation, maintains normal cristae morphology and complex I respiration activity, promotes antiapoptotic activity and protects mitochondria from the accumulation of oxidatively damaged membrane proteins. Required to control the accumulation of nonassembled respiratory chain subunits (NDUFB6, OX4 and ND1). Involved in the mitochondrial adaptation in response to various signals, such as stress or developmental cues, by mediating degradation of mitochondrial proteins to rewire the mitochondrial proteome. Catalyzes degradation of mitochondrial proteins, such as translocases, lipid transfer proteins and metabolic enzymes in response to nutrient starvation in order to limit mitochondrial biogenesis: mechanistically, YME1L is activated by decreased phosphatidylethanolamine levels caused by LPIN1 activity in response to mTORC1 inhibition. Acts as a regulator of adult neural stem cell self-renewal by promoting mitochondrial proteome rewiring, preserving neural stem and progenitor cells self-renewal. Required for normal, constitutive degradation of PRELID1. Catalyzes the degradation of OMA1 in response to membrane depolarization. Mediates degradation of TIMM17A downstream of the integrated stress response (ISR). Catalyzes degradation of MICU1 when MICU1 is not assembled via an interchain disulfide. This Rattus norvegicus (Rat) protein is ATP-dependent zinc metalloprotease YME1L1 (Yme1l1).